Consider the following 699-residue polypeptide: Kinesin-like protein KIF3A (699 aa).

Residues 14–345 (NVKVVVRCRP…LRYANRAKNI (332 aa)) form the Kinesin motor domain. Residue 100 to 107 (GQTGTGKT) coordinates ATP. Positions 355–590 (PKDALLRQFQ…LSRELRLQML (236 aa)) form a coiled coil. 2 disordered regions span residues 372–421 (KKLE…KMIE) and 663–699 (SLMK…SLLQ). Residues 376–400 (EGEEISGSDISGSEEDDDEEGEVGE) show a composition bias toward acidic residues. The segment covering 672 to 687 (TSKGKARPKTGRRKRS) has biased composition (basic residues). Ser-687 is modified (phosphoserine). The interval 697-699 (LLQ) is globular.

This sequence belongs to the TRAFAC class myosin-kinesin ATPase superfamily. Kinesin family. Kinesin II subfamily. Heterodimer of KIF3A and KIF3B. Interacts with CIMAP3. Interacts with CLN3. Interacts with DCTN1. Interacts with FLCN. Interacts with AP3B1.

The protein localises to the cytoplasm. It is found in the cytoskeleton. The protein resides in the cell projection. Its subcellular location is the cilium. It localises to the microtubule organizing center. The protein localises to the centrosome. It is found in the centriole. In terms of biological role, microtubule-based anterograde translocator for membranous organelles. Plus end-directed microtubule sliding activity in vitro. Plays a role in primary cilia formation. Plays a role in centriole cohesion and subdistal appendage organization and function. Regulates the formation of the subdistal appendage via recruitment of DCTN1 to the centriole. Also required for ciliary basal feet formation and microtubule anchoring to mother centriole. In Homo sapiens (Human), this protein is Kinesin-like protein KIF3A (KIF3A).